The chain runs to 474 residues: Shufflon protein A (474 aa).

The tract at residues Met-1 to Gly-361 is constant region. Positions Thr-362–Thr-474 are variable region.

In Escherichia coli, this protein is Shufflon protein A.